Consider the following 344-residue polypeptide: Protein BREVIS RADIX (344 aa).

Residues 139-194 form the BRX 1 domain; sequence KEWMAQVEPGVHITFASLPTGGNDLKRIRFSREMFDKWQAQRWWGENYDKIVELYN. The disordered stretch occupies residues 203 to 286; that stretch reads LQTPARSDDQ…DPPSMSNASE (84 aa). The span at 223–233 shows a compositional bias: basic and acidic residues; sequence DSARESKDWTP. Over residues 248–264 the composition is skewed to low complexity; it reads YGGSSNYGPGSYHGGPP. The 56-residue stretch at 289–344 folds into the BRX 2 domain; sequence AEWIEEDEPGVYITIRQLSDGTRELRRVRFSRERFGEVHAKTWWEQNRERIQTQYL.

It belongs to the BRX family. Homodimer and heterodimer with BRXL1. Interacts with NGA1 and ARF5. Expressed in the developing protophloem up to the elongation zone in root meristem of young seedlings, in the columella and the phloem vasculature throughout the root and in the phloem vasculature in the shoot. Detected in the shoot meristem and in primordia. Low expression in stomata. Confined to sieve element precursor cells and to protophloem.

It is found in the nucleus. The protein localises to the cell membrane. Functionally, acts as a regulator of cell proliferation and elongation in the root and shoot. Regulates roots architecture and primary root protophloem differentiation. BRX, BAM3, and CLE45 act together to regulate the transition of protophloem cells from proliferation to differentiation, thus impinging on postembryonic growth capacity of the root meristem. Probable transcription regulator. Regulated by the auxin response factor ARF5. Polarly localized in vascular cells and subject to endocytic recycling. Required for CPD expression and for correct nuclear auxin response. Mediates cross-talk between the auxin and brassinosteroid pathways. BRX is a target for auxin-induced, proteasome-mediated degradation. This is Protein BREVIS RADIX from Arabidopsis thaliana (Mouse-ear cress).